The sequence spans 261 residues: Small ribosomal subunit protein uS3 (261 aa).

A KH type-2 domain is found at Val-39–Arg-107. A disordered region spans residues Gln-213–Ala-261. Residues Ala-221–Lys-254 show a composition bias toward basic and acidic residues.

The protein belongs to the universal ribosomal protein uS3 family. As to quaternary structure, part of the 30S ribosomal subunit. Forms a tight complex with proteins S10 and S14.

In terms of biological role, binds the lower part of the 30S subunit head. Binds mRNA in the 70S ribosome, positioning it for translation. This is Small ribosomal subunit protein uS3 from Dechloromonas aromatica (strain RCB).